We begin with the raw amino-acid sequence, 203 residues long: MENNVKKETIVDSEKVEKQQLVTAPVVNKKENTEPKAKTFKRETTTSNFEERVVKIKRISKTTKGGRMMRFSALVVIGDKNGTVGFGMGKSIEVPDAIKKAIKNANNNLIKVKQTKKGSIYHDVNGRHGAAKVMLLPAPEGTGIIAGGPVRAVVELAGFTDIYTKSRGANAPMNVIRATINGLLQQLTPKEIARLRDKSLREI.

Residues 49–112 enclose the S5 DRBM domain; that stretch reads FEERVVKIKR…KNANNNLIKV (64 aa).

Belongs to the universal ribosomal protein uS5 family. Part of the 30S ribosomal subunit. Contacts proteins S4 and S8.

Its function is as follows. With S4 and S12 plays an important role in translational accuracy. In terms of biological role, located at the back of the 30S subunit body where it stabilizes the conformation of the head with respect to the body. The polypeptide is Small ribosomal subunit protein uS5 (Ureaplasma parvum serovar 3 (strain ATCC 700970)).